A 336-amino-acid polypeptide reads, in one-letter code: Polyadenylate-binding protein-interacting protein 12 (336 aa).

Residues 14 to 47 (EAGGLISPSPPSSVTSQESGASSNNDHGGNGIHD) are disordered. Residues 25-40 (SSVTSQESGASSNNDH) show a composition bias toward polar residues. A PAM2-like motif is present at residues 75–85 (KLNPMAKEFIP). The short motif at 122–134 (RRKKSFGQQGKRR) is the Bipartite nuclear localization signal element. 2 consecutive RRM domains span residues 150 to 225 (RTVY…PSKT) and 247 to 323 (RTIY…PSKT).

Interacts with MPC. In terms of tissue distribution, expressed in roots, leaves, stems, flowers and siliques. Detected in flowers only in growing organs: gynoecium, petals, stamenal filaments, anther walls and ovules.

It is found in the nucleus. Its function is as follows. Binds nucleotic acids in vitro. This is Polyadenylate-binding protein-interacting protein 12 (CID12) from Arabidopsis thaliana (Mouse-ear cress).